The chain runs to 273 residues: Ribosomal RNA small subunit methyltransferase A (273 aa).

S-adenosyl-L-methionine is bound by residues Asn19, Leu21, Gly46, Glu67, Asp92, and Asn113.

It belongs to the class I-like SAM-binding methyltransferase superfamily. rRNA adenine N(6)-methyltransferase family. RsmA subfamily.

It localises to the cytoplasm. It carries out the reaction adenosine(1518)/adenosine(1519) in 16S rRNA + 4 S-adenosyl-L-methionine = N(6)-dimethyladenosine(1518)/N(6)-dimethyladenosine(1519) in 16S rRNA + 4 S-adenosyl-L-homocysteine + 4 H(+). Specifically dimethylates two adjacent adenosines (A1518 and A1519) in the loop of a conserved hairpin near the 3'-end of 16S rRNA in the 30S particle. May play a critical role in biogenesis of 30S subunits. The chain is Ribosomal RNA small subunit methyltransferase A from Hahella chejuensis (strain KCTC 2396).